The chain runs to 246 residues: Homeobox protein SIX6 (246 aa).

Positions 126-186 (WDGEQKTHCF…KNRRQRDRAA (61 aa)) form a DNA-binding region, homeobox. A disordered region spans residues 190–246 (NRLQQQVLSQGPGRVLRSEGEGTPEVLGVASSPAASLSSKAATSAISITSSDSECDI). Residue Thr212 is modified to Phosphothreonine. The segment covering 219 to 246 (ASSPAASLSSKAATSAISITSSDSECDI) has biased composition (low complexity). Phosphoserine is present on residues Ser221, Ser225, Ser227, and Ser228.

Belongs to the SIX/Sine oculis homeobox family. As to quaternary structure, interacts with TLE4 and TLE5. As to expression, in the developing embryo, expressed mainly in the ventral optic stalk, optic chiasma, the neural retina and the primordial tissues that give rise to the pituitary/hypothalamus axis. Not expressed in the lens placode.

Its subcellular location is the nucleus. Its function is as follows. May be involved in eye development. The sequence is that of Homeobox protein SIX6 (Six6) from Mus musculus (Mouse).